The primary structure comprises 718 residues: Putative proline-rich receptor-like protein kinase PERK11 (718 aa).

Positions 1 to 256 (MDKVQQQADL…GGTSQQSNES (256 aa)) are disordered. The Extracellular portion of the chain corresponds to 1 to 262 (MDKVQQQADL…SNESNYTEKT (262 aa)). Composition is skewed to pro residues over residues 45-105 (ATSP…PPQS), 115-132 (IPFPKPQLPPPSLFPPPS), and 157-167 (LPSPPSTPFSP). Low complexity-rich tracts occupy residues 168 to 203 (PSQENSGSQGSPPLSSLLPPMLPLNPNSPGNPLQPL) and 211 to 244 (SNRVPSSSSSPSPPSLSGSNNHSGGSNRHNANSN). 3 N-linked (GlcNAc...) asparagine glycosylation sites follow: Asn-231, Asn-254, and Asn-257. The helical transmembrane segment at 263–283 (VIGIGIAGVLVILFIAGVFFV) threads the bilayer. Over 284–718 (RRKQKKGSSS…RAFNTSHRNH (435 aa)) the chain is Cytoplasmic. The disordered stretch occupies residues 314–348 (HYRQKPGNGNSSAQNSSPDTNSLGNPKHGRGTPDS). Over residues 320–337 (GNGNSSAQNSSPDTNSLG) the composition is skewed to polar residues. The residue at position 359 (Thr-359) is a Phosphothreonine. Positions 370 to 649 (FCKSFVVGEG…VRALDTRDDL (280 aa)) constitute a Protein kinase domain. ATP is bound by residues 376–384 (VGEGGFGCV) and Lys-398. Tyr-443 is subject to Phosphotyrosine. Residue Asp-494 is the Proton acceptor of the active site. A phosphoserine mark is found at Ser-498 and Ser-527. Phosphothreonine occurs at positions 528 and 533. Tyr-541 carries the phosphotyrosine modification. A disordered region spans residues 683–718 (SSDLGTNTGYYPSQDYATSHEYESESRAFNTSHRNH). 2 stretches are compositionally biased toward polar residues: residues 685–699 (DLGTNTGYYPSQDYA) and 709–718 (RAFNTSHRNH).

The protein belongs to the protein kinase superfamily. Ser/Thr protein kinase family. Mostly expressed in flower buds.

It is found in the cell membrane. It catalyses the reaction L-seryl-[protein] + ATP = O-phospho-L-seryl-[protein] + ADP + H(+). The catalysed reaction is L-threonyl-[protein] + ATP = O-phospho-L-threonyl-[protein] + ADP + H(+). The sequence is that of Putative proline-rich receptor-like protein kinase PERK11 (PERK11) from Arabidopsis thaliana (Mouse-ear cress).